The chain runs to 1014 residues: Klotho (1014 aa).

Residues 1–34 (MLARAPPRRPPRLVLLRLLLLHLLLLALRARCLS) form the signal peptide. Residues 35–982 (AEPGQGAQTW…TECGFFQTRK (948 aa)) are Extracellular-facing. Glycosyl hydrolase-1 stretches follow at residues 59-508 (LHDT…DNGF) and 517-955 (LEGT…SNGF). N-linked (GlcNAc...) asparagine glycosylation is found at Asn161, Asn285, Asn346, Asn609, Asn614, and Asn696. A helical membrane pass occupies residues 983 to 1003 (SLLVFISFLVFTFIISLALIF). The Cytoplasmic portion of the chain corresponds to 1004-1014 (HYSKKGQRSYK).

The protein belongs to the glycosyl hydrolase 1 family. Klotho subfamily. Homodimer. Interacts with FGF23 and FGFR1. In terms of processing, N-glycosylated. Membrane-bound protein is present in distal renal tubules, inner ear, ependymal cells of brain choroid plexus, elongating spermatids and mature oocytes (at protein level). Soluble peptide is present in serum (100 pM) and cerebrospinal fluid. Expressed strongly in kidney, moderately in brain choroid plexus, and at low levels in pituitary, placenta, skeletal muscle, urinary bladder, aorta, pancreas, testis, ovary, colon, thyroid gland and adipocytes.

The protein resides in the cell membrane. It is found in the apical cell membrane. It localises to the secreted. The catalysed reaction is a beta-D-glucuronoside + H2O = D-glucuronate + an alcohol. Its activity is regulated as follows. Inhibited by D-saccharic acid 1,4-lactone and taurocholic acid. Its function is as follows. May have weak glycosidase activity towards glucuronylated steroids. However, it lacks essential active site Glu residues at positions 241 and 874, suggesting it may be inactive as a glycosidase in vivo. May be involved in the regulation of calcium and phosphorus homeostasis by inhibiting the synthesis of active vitamin D. Essential factor for the specific interaction between FGF23 and FGFR1. In terms of biological role, the Klotho peptide generated by cleavage of the membrane-bound isoform may be an anti-aging circulating hormone which would extend life span by inhibiting insulin/IGF1 signaling. The polypeptide is Klotho (Kl) (Mus musculus (Mouse)).